The primary structure comprises 181 residues: Kappa-casein (181 aa).

An N-terminal signal peptide occupies residues 1–21 (MMRNFIVVVNILALTLPFLAA). A Phosphothreonine modification is found at threonine 123. 3 O-linked (GalNAc...) threonine glycosylation sites follow: threonine 134, threonine 144, and threonine 155. Serine 162 carries the post-translational modification Phosphoserine; alternate. Residue serine 162 is glycosylated (O-linked (GalNAc...) serine; alternate). The residue at position 178 (serine 178) is a Phosphoserine.

It belongs to the kappa-casein family. As to expression, mammary gland specific. Secreted in milk.

The protein localises to the secreted. Kappa-casein stabilizes micelle formation, preventing casein precipitation in milk. The chain is Kappa-casein (Csn3) from Mus musculus (Mouse).